The sequence spans 384 residues: Putative exopolyphosphatase (384 aa).

Mn(2+) is bound by residues D40, D42, D116, H138, and D200.

It belongs to the PPase class C family. Requires Mn(2+) as cofactor.

It carries out the reaction [phosphate](n) + H2O = [phosphate](n-1) + phosphate + H(+). Its function is as follows. Degradation of inorganic polyphosphates. The sequence is that of Putative exopolyphosphatase from Schizosaccharomyces pombe (strain 972 / ATCC 24843) (Fission yeast).